Consider the following 518-residue polypeptide: 3-octaprenyl-4-hydroxybenzoate carboxy-lyase (518 aa).

N177 serves as a coordination point for Mn(2+). Residues 180–182 (IYR), 194–196 (RWL), and 199–200 (RG) each bind prenylated FMN. E243 provides a ligand contact to Mn(2+). Catalysis depends on D318, which acts as the Proton donor.

Belongs to the UbiD family. Homohexamer. Prenylated FMN serves as cofactor. Mn(2+) is required as a cofactor.

The protein localises to the cell membrane. It catalyses the reaction a 4-hydroxy-3-(all-trans-polyprenyl)benzoate + H(+) = a 2-(all-trans-polyprenyl)phenol + CO2. It participates in cofactor biosynthesis; ubiquinone biosynthesis. In terms of biological role, catalyzes the decarboxylation of 3-octaprenyl-4-hydroxy benzoate to 2-octaprenylphenol, an intermediate step in ubiquinone biosynthesis. In Burkholderia multivorans (strain ATCC 17616 / 249), this protein is 3-octaprenyl-4-hydroxybenzoate carboxy-lyase.